Here is a 411-residue protein sequence, read N- to C-terminus: F-box protein At4g19940 (411 aa).

The F-box domain occupies 29-75 (RQPIPEIPFDLVIEILTRLPAKSLMRFKSVSKLWSSLICSRNFTNRL).

This Arabidopsis thaliana (Mouse-ear cress) protein is F-box protein At4g19940.